We begin with the raw amino-acid sequence, 562 residues long: Putative transport protein ECA2683 (562 aa).

6 helical membrane-spanning segments follow: residues 8-28, 32-52, 66-86, 93-113, 116-136, and 158-178; these read LLNG…LCLG, LGPV…LLGQ, FMLF…SIFF, FMLA…LGKL, WGIG…PVLV, and HLSL…IFGA. 2 consecutive RCK C-terminal domains span residues 202–288 and 290–373; these read LDVD…NFRD and KEVF…RIGF. The next 5 helical transmembrane spans lie at 383–403, 406–426, 447–467, 478–498, and 537–557; these read LLAF…TIQF, FTFG…LGFL, FGLM…INSS, SGLI…AYVL, and GTYA…VVIW.

This sequence belongs to the AAE transporter (TC 2.A.81) family. YbjL subfamily.

It is found in the cell membrane. The chain is Putative transport protein ECA2683 from Pectobacterium atrosepticum (strain SCRI 1043 / ATCC BAA-672) (Erwinia carotovora subsp. atroseptica).